Reading from the N-terminus, the 359-residue chain is Chorismate synthase (359 aa).

R47 is a binding site for NADP(+). Residues R123–S125, G283, K298–S302, and R326 contribute to the FMN site.

This sequence belongs to the chorismate synthase family. As to quaternary structure, homotetramer. The cofactor is FMNH2.

The enzyme catalyses 5-O-(1-carboxyvinyl)-3-phosphoshikimate = chorismate + phosphate. It functions in the pathway metabolic intermediate biosynthesis; chorismate biosynthesis; chorismate from D-erythrose 4-phosphate and phosphoenolpyruvate: step 7/7. Catalyzes the anti-1,4-elimination of the C-3 phosphate and the C-6 proR hydrogen from 5-enolpyruvylshikimate-3-phosphate (EPSP) to yield chorismate, which is the branch point compound that serves as the starting substrate for the three terminal pathways of aromatic amino acid biosynthesis. This reaction introduces a second double bond into the aromatic ring system. This is Chorismate synthase from Chlamydia abortus (strain DSM 27085 / S26/3) (Chlamydophila abortus).